The following is a 1022-amino-acid chain: Sodium/potassium-transporting ATPase subunit alpha (1022 aa).

Residues 1 to 5 constitute a propeptide that is removed on maturation; it reads MGKGA. Residues 1 to 34 are disordered; it reads MGKGAASEKYQPAATSENAKNSKKSKSKTTDLDE. Topologically, residues 6–87 are cytoplasmic; sequence ASEKYQPAAT…NALTPPPTTP (82 aa). Ser-16 bears the Phosphoserine; by PKC mark. Positions 82–84 are interaction with phosphoinositide-3 kinase; it reads PPP. A helical membrane pass occupies residues 88-108; that stretch reads EWIKFCRQLFGGFSILLWTGA. Residues 109–131 lie on the Lumenal side of the membrane; sequence ILCFLAYGIQVATVDNPANDNLY. The chain crosses the membrane as a helical span at residues 132 to 152; sequence LGVVLSTVVIITGCFSYYQEA. The Cytoplasmic portion of the chain corresponds to 153-288; the sequence is KSSKIMDSFK…VGQTPIAAEI (136 aa). Residues 215–235 form a disordered region; sequence NSSLTGESEPQSRSPEYSSEN. Residues 289 to 308 traverse the membrane as a helical segment; that stretch reads EHFIHIITGVAVFLGVSFFI. Residues 309–320 lie on the Lumenal side of the membrane; the sequence is LSLILGYTWLEA. The chain crosses the membrane as a helical span at residues 321–338; the sequence is VIFLIGIIVANVPEGLLA. Residues 339–771 are Cytoplasmic-facing; sequence TVTVCLTLTA…EEGRLIFDNL (433 aa). Asp-376 (4-aspartylphosphate intermediate) is an active-site residue. Mg(2+)-binding residues include Asp-716 and Asp-720. The helical transmembrane segment at 772 to 791 threads the bilayer; sequence KKSIAYTLTSNIPEITPFLV. Over 792-801 the chain is Lumenal; sequence FIIANVPLPL. A helical membrane pass occupies residues 802-822; it reads GTVTILCIDLGTDMVPAISLA. Over 823 to 842 the chain is Cytoplasmic; the sequence is YERAESDIMKRQPRNPKTDK. A helical transmembrane segment spans residues 843 to 865; the sequence is LVNERLISMAYGQIGMIQALGGF. Over 866–917 the chain is Lumenal; the sequence is FSYFVILAENGFLPIDLIGIREKWDELWTQDLEDSYGQQWTYEQRKIVEYTC. The chain crosses the membrane as a helical span at residues 918-937; it reads HTSFFVSIVIVQWADLIICK. The Cytoplasmic portion of the chain corresponds to 938–950; that stretch reads TRRNSIFQQGMKN. Ser-942 carries the post-translational modification Phosphoserine; by PKA. Residues 951-969 form a helical membrane-spanning segment; the sequence is KILIFGLFEETALAAFLSY. Residues 970–984 are Lumenal-facing; sequence TPGTDIALRMYPLKP. The chain crosses the membrane as a helical span at residues 985 to 1005; that stretch reads SWWFCAFPYSLIIFLYDEARR. The Cytoplasmic portion of the chain corresponds to 1006 to 1022; the sequence is FILRRNPGGWVEQETYY.

This sequence belongs to the cation transport ATPase (P-type) (TC 3.A.3) family. Type IIC subfamily. As to quaternary structure, the sodium/potassium-transporting ATPase is composed of a catalytic alpha subunit, an auxiliary non-catalytic beta subunit and an additional regulatory subunit.

It is found in the cell membrane. It catalyses the reaction K(+)(out) + Na(+)(in) + ATP + H2O = K(+)(in) + Na(+)(out) + ADP + phosphate + H(+). In terms of biological role, this is the catalytic component of the active enzyme, which catalyzes the hydrolysis of ATP coupled with the exchange of sodium and potassium ions across the plasma membrane. This action creates the electrochemical gradient of sodium and potassium ions, providing the energy for active transport of various nutrients. The sequence is that of Sodium/potassium-transporting ATPase subunit alpha from Tetronarce californica (Pacific electric ray).